The primary structure comprises 141 residues: Hemoglobin subunit alpha-A (141 aa).

The 141-residue stretch at V1 to R141 folds into the Globin domain. O2 is bound at residue H58. A heme b-binding site is contributed by H87.

It belongs to the globin family. Heterotetramer of two alpha chains and two beta chains. Red blood cells.

In terms of biological role, involved in oxygen transport from the lung to the various peripheral tissues. The polypeptide is Hemoglobin subunit alpha-A (HBAA) (Passer montanus (Eurasian tree sparrow)).